Consider the following 387-residue polypeptide: tRNA pseudouridine synthase B (387 aa).

The active-site Nucleophile is Asp43.

It belongs to the pseudouridine synthase TruB family. Type 1 subfamily.

It carries out the reaction uridine(55) in tRNA = pseudouridine(55) in tRNA. Functionally, responsible for synthesis of pseudouridine from uracil-55 in the psi GC loop of transfer RNAs. In Bifidobacterium longum (strain DJO10A), this protein is tRNA pseudouridine synthase B.